Here is a 406-residue protein sequence, read N- to C-terminus: 1H-pyrrole-2-carbonyl-[peptidyl-carrier protein] brominase (406 aa).

10 residues coordinate FAD: Ala17, Glu36, Arg42, His44, Ile45, Ser48, Arg101, Val124, Asp291, and Val304.

Belongs to the flavin-dependent halogenase family.

The enzyme catalyses (1H-pyrrole-2-carbonyl)-[peptidyl-carrier protein] + 3 bromide + 3 FADH2 + 3 O2 = (3,4,5-tribromo-1H-pyrrole-2-carbonyl)-[peptidyl-carrier protein] + 3 FAD + 6 H2O. It catalyses the reaction (1H-pyrrole-2-carbonyl)-[peptidyl-carrier protein] + bromide + FADH2 + O2 = (5-bromo-1H-pyrrole-2-carbonyl)-[peptidyl-carrier protein] + FAD + 2 H2O. It carries out the reaction (5-bromo-1H-pyrrole-2-carbonyl)-[peptidyl-carrier protein] + bromide + FADH2 + O2 = (4,5-dibromo-1H-pyrrole-2-carbonyl)-[peptidyl-carrier protein] + FAD + 2 H2O. The catalysed reaction is (4,5-dibromo-1H-pyrrole-2-carbonyl)-[peptidyl-carrier protein] + bromide + FADH2 + O2 = (3,4,5-tribromo-1H-pyrrole-2-carbonyl)-[peptidyl-carrier protein] + FAD + 2 H2O. Brominase involved in the biosynthesis of polybrominated aromatic organic compounds. Catalyzes three successive rounds of bromination of pyrrolyl-S-Bmp1 to produce mono-, di- and tribromopyrrolyl-S-Bmp1. This is 1H-pyrrole-2-carbonyl-[peptidyl-carrier protein] brominase from Pseudoalteromonas luteoviolacea (strain 2ta16).